The following is a 71-amino-acid chain: NAD(P)H-quinone oxidoreductase subunit O (71 aa).

This sequence belongs to the complex I NdhO subunit family. As to quaternary structure, NDH-1 can be composed of about 15 different subunits; different subcomplexes with different compositions have been identified which probably have different functions.

It localises to the cellular thylakoid membrane. It carries out the reaction a plastoquinone + NADH + (n+1) H(+)(in) = a plastoquinol + NAD(+) + n H(+)(out). The enzyme catalyses a plastoquinone + NADPH + (n+1) H(+)(in) = a plastoquinol + NADP(+) + n H(+)(out). NDH-1 shuttles electrons from an unknown electron donor, via FMN and iron-sulfur (Fe-S) centers, to quinones in the respiratory and/or the photosynthetic chain. The immediate electron acceptor for the enzyme in this species is believed to be plastoquinone. Couples the redox reaction to proton translocation, and thus conserves the redox energy in a proton gradient. Cyanobacterial NDH-1 also plays a role in inorganic carbon-concentration. This is NAD(P)H-quinone oxidoreductase subunit O from Nostoc punctiforme (strain ATCC 29133 / PCC 73102).